The sequence spans 1060 residues: DNA-directed RNA polymerase subunit beta (1060 aa).

This sequence belongs to the RNA polymerase beta chain family. In terms of assembly, in plastids the minimal PEP RNA polymerase catalytic core is composed of four subunits: alpha, beta, beta', and beta''. When a (nuclear-encoded) sigma factor is associated with the core the holoenzyme is formed, which can initiate transcription.

Its subcellular location is the plastid. It is found in the chloroplast. It catalyses the reaction RNA(n) + a ribonucleoside 5'-triphosphate = RNA(n+1) + diphosphate. Functionally, DNA-dependent RNA polymerase catalyzes the transcription of DNA into RNA using the four ribonucleoside triphosphates as substrates. This chain is DNA-directed RNA polymerase subunit beta, found in Helianthus annuus (Common sunflower).